A 946-amino-acid polypeptide reads, in one-letter code: Translation initiation factor IF-2 (946 aa).

Disordered stretches follow at residues 58–250 and 301–324; these read AERK…AVVI and VSRD…KSLS. Composition is skewed to low complexity over residues 102-165 and 174-185; these read EPPQ…QPAA and AQPSAPQPAAAQ. Residues 186 to 211 are compositionally biased toward pro residues; sequence PRPPQPPMPSRPPPAGYRPAPPPGAR. Residues 212 to 229 are compositionally biased toward low complexity; the sequence is PPMSAAPGAPAQPGAAAQ. In terms of domain architecture, tr-type G spans 445-614; that stretch reads IRPPVVTVMG…ALQSEVLELK (170 aa). A G1 region spans residues 454–461; sequence GHVDHGKT. GTP is bound at residue 454-461; the sequence is GHVDHGKT. The G2 stretch occupies residues 479 to 483; that stretch reads GITQH. The interval 500–503 is G3; sequence DTPG. GTP is bound by residues 500–504 and 554–557; these read DTPGH and NKVD. The G4 stretch occupies residues 554–557; it reads NKVD. A G5 region spans residues 590-592; it reads SAR.

It belongs to the TRAFAC class translation factor GTPase superfamily. Classic translation factor GTPase family. IF-2 subfamily.

The protein resides in the cytoplasm. One of the essential components for the initiation of protein synthesis. Protects formylmethionyl-tRNA from spontaneous hydrolysis and promotes its binding to the 30S ribosomal subunits. Also involved in the hydrolysis of GTP during the formation of the 70S ribosomal complex. The polypeptide is Translation initiation factor IF-2 (Anaeromyxobacter sp. (strain K)).